The following is a 63-amino-acid chain: uncharacterized protein (63 aa).

This is an uncharacterized protein from Vaccinia virus (strain Western Reserve) (VACV).